Here is a 275-residue protein sequence, read N- to C-terminus: T-cell ecto-ADP-ribosyltransferase 1 (275 aa).

The signal sequence occupies residues 1-20 (MPSNICKFFLTWWLIQQVTG). 2 cysteine pairs are disulfide-bonded: C41-C243 and C141-C193. N58 carries an N-linked (GlcNAc...) asparagine glycan. The region spanning 61–238 (EKLKVAWEEA…IFLDSPKRKK (178 aa)) is the TR mART core domain. Y98, R146, and Q164 together coordinate NAD(+). R146 is an active-site residue. S167 is an active-site residue. An NAD(+)-binding site is contributed by S202. The active site involves E209. S246 carries the GPI-anchor amidated serine lipid modification. The propeptide at 247–275 (SAGTRESCVSLFLVVLTSLLVQLLCLAEP) is removed in mature form.

This sequence belongs to the Arg-specific ADP-ribosyltransferase family. Postthymic T-cells.

The protein localises to the cell membrane. It catalyses the reaction L-arginyl-[protein] + NAD(+) = N(omega)-(ADP-D-ribosyl)-L-arginyl-[protein] + nicotinamide + H(+). It carries out the reaction NAD(+) + H2O = ADP-D-ribose + nicotinamide + H(+). Its function is as follows. Has NAD(+) glycohydrolase activity and extremely low ADP-ribosyltransferase activity. This is T-cell ecto-ADP-ribosyltransferase 1 (Art2a) from Rattus norvegicus (Rat).